Reading from the N-terminus, the 278-residue chain is Undecaprenyl-diphosphatase (278 aa).

Transmembrane regions (helical) follow at residues 2 to 22 (ALVE…TEWL), 44 to 64 (AFME…VVLL), 85 to 105 (IEMW…GLLW), 113 to 133 (FYNY…FIVI), 150 to 170 (ITYT…IFPG), 189 to 209 (TVAA…ASAL), 223 to 243 (LMIL…SIKF), and 253 to 273 (FKIF…YFSA).

This sequence belongs to the UppP family.

The protein resides in the cell membrane. It carries out the reaction di-trans,octa-cis-undecaprenyl diphosphate + H2O = di-trans,octa-cis-undecaprenyl phosphate + phosphate + H(+). In terms of biological role, catalyzes the dephosphorylation of undecaprenyl diphosphate (UPP). Confers resistance to bacitracin. This is Undecaprenyl-diphosphatase from Desulfitobacterium hafniense (strain DSM 10664 / DCB-2).